We begin with the raw amino-acid sequence, 202 residues long: tRNA (pseudouridine(54)-N(1))-methyltransferase (202 aa).

Residues L130, G152, and C185 each coordinate S-adenosyl-L-methionine.

Belongs to the methyltransferase superfamily. TrmY family. In terms of assembly, homodimer.

It is found in the cytoplasm. The catalysed reaction is pseudouridine(54) in tRNA + S-adenosyl-L-methionine = N(1)-methylpseudouridine(54) in tRNA + S-adenosyl-L-homocysteine + H(+). In terms of biological role, specifically catalyzes the N1-methylation of pseudouridine at position 54 (Psi54) in tRNAs. The chain is tRNA (pseudouridine(54)-N(1))-methyltransferase from Methanococcoides burtonii (strain DSM 6242 / NBRC 107633 / OCM 468 / ACE-M).